The chain runs to 129 residues: MARVTVEDCIDKVDNRFELVLLASHRARQISQGSSITVDRDNDKNPVVALREIADETLSPDDLKEDLIHSLQKHVEVDEPEPDPVTLAASAADGEDDDQPETVTFDQMSEEELLAGIEGLVPPEKNDDY.

Residues 76–101 (EVDEPEPDPVTLAASAADGEDDDQPE) are disordered.

It belongs to the RNA polymerase subunit omega family. As to quaternary structure, the RNAP catalytic core consists of 2 alpha, 1 beta, 1 beta' and 1 omega subunit. When a sigma factor is associated with the core the holoenzyme is formed, which can initiate transcription.

It carries out the reaction RNA(n) + a ribonucleoside 5'-triphosphate = RNA(n+1) + diphosphate. Functionally, promotes RNA polymerase assembly. Latches the N- and C-terminal regions of the beta' subunit thereby facilitating its interaction with the beta and alpha subunits. The polypeptide is DNA-directed RNA polymerase subunit omega (Agrobacterium fabrum (strain C58 / ATCC 33970) (Agrobacterium tumefaciens (strain C58))).